Reading from the N-terminus, the 131-residue chain is Ribosome-binding factor A (131 aa).

This sequence belongs to the RbfA family. In terms of assembly, monomer. Binds 30S ribosomal subunits, but not 50S ribosomal subunits or 70S ribosomes.

It localises to the cytoplasm. In terms of biological role, one of several proteins that assist in the late maturation steps of the functional core of the 30S ribosomal subunit. Associates with free 30S ribosomal subunits (but not with 30S subunits that are part of 70S ribosomes or polysomes). Required for efficient processing of 16S rRNA. May interact with the 5'-terminal helix region of 16S rRNA. In Thermotoga maritima (strain ATCC 43589 / DSM 3109 / JCM 10099 / NBRC 100826 / MSB8), this protein is Ribosome-binding factor A.